Reading from the N-terminus, the 881-residue chain is Lon protease (881 aa).

The span at 1 to 24 (MAKNTDIEHDAHEPAGHGDVRESA) shows a compositional bias: basic and acidic residues. The disordered stretch occupies residues 1 to 77 (MAKNTDIEHD…RAGEAEKGVP (77 aa)). The segment covering 49 to 59 (QTDTESAQGAA) has biased composition (polar residues). A compositionally biased stretch (basic and acidic residues) spans 65–77 (EVQRAGEAEKGVP). The 194-residue stretch at 94–287 (VHLIPLTGRP…EVFVYIKKEK (194 aa)) folds into the Lon N-terminal domain. 440 to 447 (GPPGVGKT) provides a ligand contact to ATP. Residues 679 to 861 (ANKVGTAVGL…EEVLSLAFPK (183 aa)) form the Lon proteolytic domain. Residues serine 767 and lysine 810 contribute to the active site.

The protein belongs to the peptidase S16 family. As to quaternary structure, homohexamer. Organized in a ring with a central cavity.

Its subcellular location is the cytoplasm. The catalysed reaction is Hydrolysis of proteins in presence of ATP.. ATP-dependent serine protease that mediates the selective degradation of mutant and abnormal proteins as well as certain short-lived regulatory proteins. Required for cellular homeostasis and for survival from DNA damage and developmental changes induced by stress. Degrades polypeptides processively to yield small peptide fragments that are 5 to 10 amino acids long. Binds to DNA in a double-stranded, site-specific manner. This Treponema pallidum (strain Nichols) protein is Lon protease.